The sequence spans 1848 residues: MAAPSPAGGAPSHAQSSLPSLPAHLQSDTHLTAHLASRFHVGLPTARLSSQALISLNTYTTSTKGPDGGKEGSAMGEAEDLAKRAFTRLGARGENQAVVFLGESGSGKTTIRSHLLSAFLSFSSTPLSSKLSYAAFLFDTLTTTKSLTTQTASKAGLFLELQYDGSSSVNPTLIGGKIIDHRLERSRITSVPTGERSFHVLYYLLAGTSPAEKAHLGFDKAVHVSTSSGAIGHKRWRYLGHPTQLKVGVNDVEGFQHFKTALRKLEFPRSEIAEICQILATILHIGQLEFASGQATTTHAEESGGYSHEGGETVTIVKNKDVLSIIAAFLGLSVEDLENSFGYRTKTIHRERVTVMLDPKGARQNADELARTIYSLLVAYVIEAVNQRICAAEDSVANTISIVDFPGFAQACATGSTLDQLFNNAATELLYNFCLQSFFDRKADELEREEVSVPATSYFDNTDAVRGLLKHGNGLLSILDDQTRRGRTDNQLLESLRRRFENKNPTIIVEGSKRTSLISQNARSAFTVKHFAGEIDYSVNGLIEENGEFISGDLMRLMKSTKSDFVRELFGQAALQTVTHPKEKTAIMQAQVSSKPLRMPSMARRKTSPSSRLAFDAGDADEVESQAESIAKDSSSGRRKSAMLTSGIQGAAGQFLSSLDIVNKCLSSTNLNPYFIFCLKPNDRRIANQFDSKCVRAQVQMFGIAEISQRLRNADFSVFLPFAEFLGLAEIGNIVVGSDKEKAEVVLDEKRWPGNEARVGSTGVFLSERCWADLAKVGERVVPVYAADMSDEGGDGLLHPRSTGYGDSKVRLLNPADQSPGAFIYGDEAKQGYFGSRDLDGRSDAGNSAFNSGDMFRNHETREQMLEKGNEKKMEEVDDAPISGSRKRWIALVYLLTFYIPDFAIKLFGRIKRKDVRMAWREKFAINLIIWFSCGVAIFFIVAFPGLVCPTQHVYSAAELSSHNGKDGHSSFIAIRGVVFDLDKFMPGHYPHIVPESALKKYAGVDATGLFPVQVSALCQGKSGSVDPMVLLDYRPTNISGSATTISGTDTNSVYHDFRHFTNDSRPDWFYEQMVMLKANYLKGYVGYTPKYLNTLGKKSQSIGSINGKVYDLTSYIAGGRLTKAPPGETVPSDVDTDFMDNSVVSLFQSLPGQDLSKHWENLKIDPALRRRMQLCLDNLFFVGHVDTRNSAQCEFARYFILAISVLICSIIVFKFLAALQFGRKNVPENLDKFIICQVPAYTEDEESLRRAIDSMARMRYDDKRKLLVVICDGMIIGQGNDRPTPRIVLDILGVPESVDPEPLSFESLGEGQKQHNMGKVYSGLYEVQGHIVPFLVIVKVGKPSEVSRPGNRGKRDSQMVLMRFLNRVHYNLPMSPMELEMHHQIRNVIGVNPTFYEFILQVDADTVVAPDSATRMVAAFLNDTRLIGVCGETALTNAKNSAVTMIQVYEYYISHNLTKAFESLFGSVTCLPGCFTMYRIRSAETAKPLFVSKEVVDAYAEIRVDTLHMKNLLHLGEDRYLTTLLLKHHSKYKTKYISSAKAWTIAPESWTVFLSQRRRWINSTVHNLIELIPMQQLCGFCCFSMRFVVFVDLLSTVIQPVTLAYIIYLIYWLVKDTSTIPYTSLILLAAIYGLQALIFIIRRKWEMVGWMIVYLLALPVFSLALPLYSFWHMDDFTWGNTRIITGEKGRKVVISDEGKFDPASIPKKKWEEYQTELWEAQTSRDDRSEVSGISYGTKSYHPAQSEYGFPGSRPMSQLDLPRFGSRMSLAPSEMMSRHADMEMENLSHLPSDDAILAEIREILRTADLMSVTKKSIKLELERRFGVNLDLKRPYINSATEAVLAGAL.

The span at 1-17 (MAAPSPAGGAPSHAQSS) shows a compositional bias: low complexity. Positions 1-22 (MAAPSPAGGAPSHAQSSLPSLP) are disordered. The Myosin motor domain maps to 1–779 (MAAPSPAGGA…CWADLAKVGE (779 aa)). 102-109 (GESGSGKT) contacts ATP. The tract at residues 593-621 (SSKPLRMPSMARRKTSPSSRLAFDAGDAD) is disordered. The segment at 659–683 (LDIVNKCLSSTNLNPYFIFCLKPND) is actin-binding. 2 consecutive transmembrane segments (helical) span residues 889–909 (WIAL…KLFG) and 928–948 (LIIW…PGLV). In terms of domain architecture, Cytochrome b5 heme-binding spans 952–1040 (QHVYSAAELS…LLDYRPTNIS (89 aa)). N-linked (GlcNAc...) asparagine glycans are attached at residues asparagine 1038 and asparagine 1063. The helical transmembrane segment at 1200–1220 (FILAISVLICSIIVFKFLAAL) threads the bilayer. Asparagine 1423, asparagine 1457, and asparagine 1563 each carry an N-linked (GlcNAc...) asparagine glycan. Helical transmembrane passes span 1595-1615 (LSTV…YWLV), 1621-1641 (IPYT…LIFI), and 1648-1668 (MVGW…ALPL). An N-linked (GlcNAc...) asparagine glycan is attached at asparagine 1786. The region spanning 1790-1845 (LPSDDAILAEIREILRTADLMSVTKKSIKLELERRFGVNLDLKRPYINSATEAVLA) is the DEK-C domain.

The protein in the N-terminal section; belongs to the TRAFAC class myosin-kinesin ATPase superfamily. Myosin family. It in the C-terminal section; belongs to the chitin synthase family. Class V subfamily.

The protein localises to the cell membrane. It localises to the cell septum. The protein resides in the cell tip. It catalyses the reaction [(1-&gt;4)-N-acetyl-beta-D-glucosaminyl](n) + UDP-N-acetyl-alpha-D-glucosamine = [(1-&gt;4)-N-acetyl-beta-D-glucosaminyl](n+1) + UDP + H(+). Polymerizes chitin, a structural polymer of the cell wall and septum, by transferring the sugar moiety of UDP-GlcNAc to the non-reducing end of the growing chitin polymer. Important for hyphal growth and conidiophore development but not pathogenicity. This is Chitin synthase E from Aspergillus fumigatus (strain ATCC MYA-4609 / CBS 101355 / FGSC A1100 / Af293) (Neosartorya fumigata).